The following is a 485-amino-acid chain: MALSVEKTSSGREYKVKDLFQADFGRLELELAEVEMPGLMACRTEFGPSQPFKGARISGSLHMTIQTAVLIETLTALGAEVRWCSCNIFSSQDHAAAAIARDSAAVFAWKGETLEEYWWCTERCLDWGVGGGPDLIVDDGGDATLLIHEGVKAEEEFEKSGKVPDPESTDNPEFKIVLTIIRDGLKTDASKYRKMKERLVGVSEETTTGVKRLYQMQESGTLLFPAINVNDSVTKSKFDNLYGCRHSLPDGLMRATDVMIAGKVAVVCGYGDVGKGCAAALKQAGARVIVTEIDPICALQALMEGIQILTLEDVVSEADIFVTTTGNKDIIMVDHMRKMKNNAIVCNIGHFDNEIDMNGLETYPGVKRITIKPQTDRWVFPETKTGIIVLAEGRLMNLGCATGHPSFVMSCSFTNQVIAQLELWNEKASGKYEKKVYVLPKHLDEKVAALHLGKLGARLTKLTKSQSDYISIPIEGPYKLRLYRY.

The substrate site is built by threonine 64, aspartate 139, and glutamate 205. Residue 206–208 (TTT) coordinates NAD(+). Residues lysine 235 and aspartate 239 each contribute to the substrate site. NAD(+) is bound by residues asparagine 240, 269-274 (GYGDVG), glutamate 292, asparagine 327, 348-350 (IGH), and asparagine 397.

The protein belongs to the adenosylhomocysteinase family. Homotetramer. The cofactor is NAD(+).

It catalyses the reaction S-adenosyl-L-homocysteine + H2O = L-homocysteine + adenosine. Its pathway is amino-acid biosynthesis; L-homocysteine biosynthesis; L-homocysteine from S-adenosyl-L-homocysteine: step 1/1. Its function is as follows. Adenosylhomocysteine is a competitive inhibitor of S-adenosyl-L-methionine-dependent methyl transferase reactions; therefore adenosylhomocysteinase may play a key role in the control of methylations via regulation of the intracellular concentration of adenosylhomocysteine. The sequence is that of Adenosylhomocysteinase (SAHH) from Triticum aestivum (Wheat).